The chain runs to 31 residues: Cyclotide vibi-G (31 aa).

Residues 1 to 31 (GTFPCGESCVFIPCLTSAIGCSCKSKVCYKN) constitute a cross-link (cyclopeptide (Gly-Asn)). Cystine bridges form between Cys5/Cys21, Cys9/Cys23, and Cys14/Cys28.

In terms of processing, this is a cyclic peptide.

In terms of biological role, probably participates in a plant defense mechanism. Has cytotoxic activity, active against a human lymphoma cell line with an IC(50) of 0.96 uM. The polypeptide is Cyclotide vibi-G (Viola biflora (Yellow wood violet)).